The chain runs to 72 residues: Large ribosomal subunit protein bL31 (72 aa).

Belongs to the bacterial ribosomal protein bL31 family. Type A subfamily. Part of the 50S ribosomal subunit.

In terms of biological role, binds the 23S rRNA. In Deinococcus geothermalis (strain DSM 11300 / CIP 105573 / AG-3a), this protein is Large ribosomal subunit protein bL31.